A 444-amino-acid polypeptide reads, in one-letter code: GTPase Der (444 aa).

2 consecutive EngA-type G domains span residues 2 to 167 and 173 to 349; these read LKVA…LKEI and FKFC…ENLN. Residues 8-15, 55-59, 118-121, 179-186, 226-230, and 291-294 each bind GTP; these read GKPNVGKS, DTGGL, NKSE, GRPNVGKS, DTAGI, and NKWD. Residues 350 to 434 form the KH-like domain; that stretch reads LKFNSKILTD…PITLYFKNKT (85 aa).

This sequence belongs to the TRAFAC class TrmE-Era-EngA-EngB-Septin-like GTPase superfamily. EngA (Der) GTPase family. In terms of assembly, associates with the 50S ribosomal subunit.

In terms of biological role, GTPase that plays an essential role in the late steps of ribosome biogenesis. This is GTPase Der from Malacoplasma penetrans (strain HF-2) (Mycoplasma penetrans).